A 283-amino-acid polypeptide reads, in one-letter code: Lectin-like protein At1g53080 (283 aa).

The N-terminal stretch at 1-23 (MQIHKLCIFVLFISLLSSKTISA) is a signal peptide. The tract at residues 24–277 (VKFNFNRFDG…RHDIWSWSFE (254 aa)) is legume-lectin like. Asn84 and Asn138 each carry an N-linked (GlcNAc...) asparagine glycan. Position 247 is a phosphoserine (Ser247).

It belongs to the leguminous lectin family.

The protein resides in the secreted. It is found in the extracellular space. The protein localises to the apoplast. The protein is Lectin-like protein At1g53080 of Arabidopsis thaliana (Mouse-ear cress).